A 266-amino-acid polypeptide reads, in one-letter code: Interleukin-1 beta (266 aa).

The propeptide occupies 1–114 (MAAVPELSSE…DTWDEEYESD (114 aa)).

Belongs to the IL-1 family. As to quaternary structure, monomer. In its precursor form, weakly interacts with full-length MEFV; the mature cytokine does not interact at all. Interacts with integrins ITGAV:ITGBV and ITGA5:ITGB1; integrin-binding is required for IL1B signaling. Interacts with cargo receptor TMED10; the interaction is direct and is required for the secretion of IL1B mature form. Interacts with HSP90AB1; the interaction facilitates cargo translocation into the ERGIC. Interacts with HSP90B1; the interaction facilitates cargo translocation into the ERGIC.

The protein localises to the cytoplasm. It localises to the cytosol. It is found in the secreted. The protein resides in the lysosome. Its subcellular location is the extracellular exosome. Its function is as follows. Potent pro-inflammatory cytokine. Initially discovered as the major endogenous pyrogen, induces prostaglandin synthesis, neutrophil influx and activation, T-cell activation and cytokine production, B-cell activation and antibody production, and fibroblast proliferation and collagen production. Promotes Th17 differentiation of T-cells. Synergizes with IL12/interleukin-12 to induce IFNG synthesis from T-helper 1 (Th1) cells. Plays a role in angiogenesis by inducing VEGF production synergistically with TNF and IL6. Involved in transduction of inflammation downstream of pyroptosis: its mature form is specifically released in the extracellular milieu by passing through the gasdermin-D (GSDMD) pore. In Cavia porcellus (Guinea pig), this protein is Interleukin-1 beta (IL1B).